Here is a 20-residue protein sequence, read N- to C-terminus: 35 kDa cell wall protein (20 aa).

It is found in the secreted. The protein localises to the cell wall. The protein is 35 kDa cell wall protein of Phaseolus vulgaris (Kidney bean).